The following is a 616-amino-acid chain: Hemagglutinin-neuraminidase (616 aa).

At 1-26 the chain is on the intravirion side; the sequence is MDRAVSQVALENDEREAKNTWRLVFR. A helical transmembrane segment spans residues 27–47; sequence IAILLLTVVTLAISAAALAYS. Over 48–616 the chain is Virion surface; it reads MEASTPSDLV…ELESYAASWP (569 aa). Asn-119 is a glycosylation site (N-linked (GlcNAc...) asparagine; by host). Positions 124–152 are important for interaction with fusion/F protein; the sequence is GAPIHDPDYIGGIGKELIVDDASDVTSFY. Cystine bridges form between Cys-172–Cys-196, Cys-186–Cys-247, and Cys-238–Cys-251. Residues 234-239 are involved in neuraminidase activity; the sequence is NRKSCS. N-linked (GlcNAc...) asparagine; by host glycans are attached at residues Asn-341 and Asn-433. 2 disulfides stabilise this stretch: Cys-344–Cys-461 and Cys-455–Cys-465. Residues Asn-481, Asn-538, and Asn-600 are each glycosylated (N-linked (GlcNAc...) asparagine; by host). Cys-531 and Cys-542 are disulfide-bonded.

Belongs to the paramyxoviruses hemagglutinin-neuraminidase family. As to quaternary structure, homotetramer; composed of disulfide-linked homodimers. Interacts with F protein trimer. Interacts with host CG-1B; this interaction inhibits viral adsorption and replication rather than internalization.

The protein localises to the virion membrane. It localises to the host cell membrane. The enzyme catalyses Hydrolysis of alpha-(2-&gt;3)-, alpha-(2-&gt;6)-, alpha-(2-&gt;8)- glycosidic linkages of terminal sialic acid residues in oligosaccharides, glycoproteins, glycolipids, colominic acid and synthetic substrates.. In terms of biological role, mediates the viral entry into the host cell together with fusion/F protein. Attaches the virus to sialic acid-containing cell receptors and thereby initiates infection. Binding of HN protein to the receptor induces a conformational change that allows the F protein to trigger virion/cell membranes fusion. Neuraminidase activity ensures the efficient spread of the virus by dissociating the mature virions from the neuraminic acid containing glycoproteins. This Gallus gallus (Chicken) protein is Hemagglutinin-neuraminidase (HN).